The following is a 345-amino-acid chain: MAAAFDREKALEHAIAQIERAHGKGSLMRLGDEARAPIDVIPTGSIALDVALGIGGLPRGRIVEIYGPESSGKTTLALHAVANAQRAGGIAAFIDAEHALDPEYAKKLGVDTDNLLVSQPDTGEQALEIADTLIRSGAIDVVVIDSVAALVPRAEIEGEMGDSHVGLQARLMSQALRKITGALSHSGTTAIFINQLREKVGVFFGSPETTTGGKALKFYASIRLDVRRIDTIKEGQEAIGNRTRVKVVKNKCASPFRQAEFDILYNVGISREGSLIDMGVEHGIIRKSGAWYTYEGDQLGQGKENARNFLRENPDLADEIEKKIKEKLGIGPRVDAPIDLTVVER.

Residue 67–74 (GPESSGKT) coordinates ATP.

This sequence belongs to the RecA family.

Its subcellular location is the cytoplasm. In terms of biological role, can catalyze the hydrolysis of ATP in the presence of single-stranded DNA, the ATP-dependent uptake of single-stranded DNA by duplex DNA, and the ATP-dependent hybridization of homologous single-stranded DNAs. It interacts with LexA causing its activation and leading to its autocatalytic cleavage. The protein is Protein RecA of Acidothermus cellulolyticus (strain ATCC 43068 / DSM 8971 / 11B).